A 394-amino-acid chain; its full sequence is MALLDLALEGMAVFGFVLFLVLWLMHFMAIIYTRLHLNKKATDKQPYSKLPGVSLLKPLKGVDPNLINNLETFFELDYPKYEVLLCVQDHDDPAIDVCKKLLGKYPNVDARLFIGGKKVGINPKINNLMPGYEVAKYDLIWICDSGIRVIPDTLTDMVNQMTEKVGLVHGLPYVADRQGFAATLEQVYFGTSHPRYYISANVTGFKCVTGMSCLMRKDVLDQAGGLIAFAQYIAEDYFMAKAIADRGWRFAMSTQVAMQNSGSYSISQFQSRMIRWTKLRINMLPATIICEPISECFVASLIIGWAAHHVFRWDIMVFFMCHCLAWFIFDYIQLRGVQGGTLCFSKLDYAVAWFIRESMTIYIFLSALWDPTISWRTGRYRLRCGGTAEEILDV.

Topologically, residues 1–10 (MALLDLALEG) are lumenal. Residues 11–32 (MAVFGFVLFLVLWLMHFMAIIY) form a helical membrane-spanning segment. Topologically, residues 33–195 (TRLHLNKKAT…QVYFGTSHPR (163 aa)) are cytoplasmic. D92 is a short sequence motif (D1). K117 bears the N6-acetyllysine mark. D144 is a short sequence motif (D2). A helical transmembrane segment spans residues 196 to 215 (YYISANVTGFKCVTGMSCLM). The Lumenal portion of the chain corresponds to 216–287 (RKDVLDQAGG…KLRINMLPAT (72 aa)). Residue D236 is a short sequence motif, D3. Residue D236 is the Proton acceptor of the active site. The short motif at 272 to 276 (RMIRW) is the (Q/R)XXRW element. The chain crosses the membrane as a helical span at residues 288-304 (IICEPISECFVASLIIG). Over 305 to 309 (WAAHH) the chain is Cytoplasmic. Residues 310 to 328 (VFRWDIMVFFMCHCLAWFI) form a helical membrane-spanning segment. Over 329–348 (FDYIQLRGVQGGTLCFSKLD) the chain is Lumenal. The helical transmembrane segment at 349–369 (YAVAWFIRESMTIYIFLSALW) threads the bilayer. The Cytoplasmic portion of the chain corresponds to 370 to 394 (DPTISWRTGRYRLRCGGTAEEILDV).

This sequence belongs to the glycosyltransferase 2 family. As to quaternary structure, interacts with RTN1; regulates the ceramide glucosyltransferase activity of UGCG. In terms of tissue distribution, found in all tissues examined.

The protein localises to the golgi apparatus membrane. It catalyses the reaction an N-acylsphing-4-enine + UDP-alpha-D-glucose = a beta-D-glucosyl-(1&lt;-&gt;1')-N-acylsphing-4-enine + UDP + H(+). The enzyme catalyses UDP-alpha-D-xylose + an N-acylsphing-4-enine = a beta-D-xylosyl-(1&lt;-&gt;1')-N-acylsphing-4-enine + UDP + H(+). The catalysed reaction is N-(9Z-octadecenoyl)-sphing-4-enine + UDP-alpha-D-xylose = beta-D-xylosyl-(1&lt;-&gt;1')-N-(9Z-octadecenoyl)-sphing-4-enine + UDP + H(+). The protein operates within lipid metabolism; sphingolipid metabolism. Participates in the initial step of the glucosylceramide-based glycosphingolipid/GSL synthetic pathway at the cytosolic surface of the Golgi. Catalyzes the transfer of glucose from UDP-glucose to ceramide to produce glucosylceramide/GlcCer (such as beta-D-glucosyl-(1&lt;-&gt;1')-N-acylsphing-4-enine). GlcCer is the core component of glycosphingolipids/GSLs, amphipathic molecules consisting of a ceramide lipid moiety embedded in the outer leaflet of the membrane, linked to one of hundreds of different externally oriented oligosaccharide structures. Glycosphingolipids are essential components of membrane microdomains that mediate membrane trafficking and signal transduction, implicated in many fundamental cellular processes, including growth, differentiation, migration, morphogenesis, cell-to-cell and cell-to-matrix interactions. They are required for instance in the proper development and functioning of the nervous system. As an example of their role in signal transduction, they regulate the leptin receptor/LEPR in the leptin-mediated signaling pathway. They also play an important role in the establishment of the skin barrier regulating keratinocyte differentiation and the proper assembly of the cornified envelope. The biosynthesis of GSLs is also required for the proper intestinal endocytic uptake of nutritional lipids. Catalyzes the synthesis of xylosylceramide/XylCer (such as beta-D-xylosyl-(1&lt;-&gt;1')-N-acylsphing-4-enine) using UDP-Xyl as xylose donor. The sequence is that of Ceramide glucosyltransferase from Homo sapiens (Human).